A 198-amino-acid chain; its full sequence is MVNYPHKLSSQKRQTSLSQPKNFANRGMSFEKMINATNDYYLSQGLAVIHKKPTPIQIVRVDYPQRSRAKIVEAYFRQASTTDYSGVYNGYYIDFEAKETKQKRAIPMKNFHPHQIQHMEQVLAQQGICFVLLHFSSQQETYLLPALDLIRFYHQDKGQKSMPLGYIREYGYEIKAGAFPQIPYLNVIKEHLLGGKTR.

Positions 1 to 22 (MVNYPHKLSSQKRQTSLSQPKN) are disordered. Over residues 11 to 22 (QKRQTSLSQPKN) the composition is skewed to polar residues. The Mg(2+) site is built by threonine 81, aspartate 83, glutamate 96, and glutamine 115.

Belongs to the RecU family. It depends on Mg(2+) as a cofactor.

It localises to the cytoplasm. It catalyses the reaction Endonucleolytic cleavage at a junction such as a reciprocal single-stranded crossover between two homologous DNA duplexes (Holliday junction).. Endonuclease that resolves Holliday junction intermediates in genetic recombination. Cleaves mobile four-strand junctions by introducing symmetrical nicks in paired strands. Promotes annealing of linear ssDNA with homologous dsDNA. Required for DNA repair, homologous recombination and chromosome segregation. In Streptococcus pneumoniae (strain Hungary19A-6), this protein is Holliday junction resolvase RecU.